The sequence spans 210 residues: Interleukin-6 (210 aa).

The first 25 residues, 1–25 (MNSLSTSAFSPVAFSLGLLLVMATA), serve as a signal peptide directing secretion. C72 and C78 are joined by a disulfide. At S81 the chain carries Phosphoserine. A disulfide bond links C101 and C111.

Belongs to the IL-6 superfamily. Component of a hexamer of two molecules each of IL6, IL6R and IL6ST; first binds to IL6R to associate with the signaling subunit IL6ST. Interacts with IL6R (via the N-terminal ectodomain); this interaction may be affected by IL6R-binding with SORL1, hence decreasing IL6 cis signaling. Interacts with SORL1 (via the N-terminal ectodomain); this interaction leads to IL6 internalization and lysosomal degradation. May form a trimeric complex with the soluble SORL1 ectodomain and soluble IL6R receptor; this interaction might stabilize circulating IL6, hence promoting IL6 trans signaling.

The protein resides in the secreted. Cytokine with a wide variety of biological functions in immunity, tissue regeneration, and metabolism. Binds to IL6R, then the complex associates to the signaling subunit IL6ST/gp130 to trigger the intracellular IL6-signaling pathway. The interaction with the membrane-bound IL6R and IL6ST stimulates 'classic signaling', whereas the binding of IL6 and soluble IL6R to IL6ST stimulates 'trans-signaling'. Alternatively, 'cluster signaling' occurs when membrane-bound IL6:IL6R complexes on transmitter cells activate IL6ST receptors on neighboring receiver cells. Its function is as follows. IL6 is a potent inducer of the acute phase response. Rapid production of IL6 contributes to host defense during infection and tissue injury, but excessive IL6 synthesis is involved in disease pathology. In the innate immune response, is synthesized by myeloid cells, such as macrophages and dendritic cells, upon recognition of pathogens through toll-like receptors (TLRs) at the site of infection or tissue injury. In the adaptive immune response, is required for the differentiation of B cells into immunoglobulin-secreting cells. Plays a major role in the differentiation of CD4(+) T cell subsets. Essential factor for the development of T follicular helper (Tfh) cells that are required for the induction of germinal-center formation. Required to drive naive CD4(+) T cells to the Th17 lineage. Also required for proliferation of myeloma cells and the survival of plasmablast cells. Functionally, acts as an essential factor in bone homeostasis and on vessels directly or indirectly by induction of VEGF, resulting in increased angiogenesis activity and vascular permeability. Induces, through 'trans-signaling' and synergistically with IL1B and TNF, the production of VEGF. Involved in metabolic controls, is discharged into the bloodstream after muscle contraction increasing lipolysis and improving insulin resistance. 'Trans-signaling' in central nervous system also regulates energy and glucose homeostasis. Mediates, through GLP-1, crosstalk between insulin-sensitive tissues, intestinal L cells and pancreatic islets to adapt to changes in insulin demand. Also acts as a myokine. Plays a protective role during liver injury, being required for maintenance of tissue regeneration. Also has a pivotal role in iron metabolism by regulating HAMP/hepcidin expression upon inflammation or bacterial infection. Through activation of IL6ST-YAP-NOTCH pathway, induces inflammation-induced epithelial regeneration. This is Interleukin-6 (IL6) from Mustela putorius furo (European domestic ferret).